The sequence spans 246 residues: Triosephosphate isomerase (246 aa).

9–11 contributes to the substrate binding site; the sequence is NWK. His-99 functions as the Electrophile in the catalytic mechanism. The active-site Proton acceptor is the Glu-168. Substrate contacts are provided by residues Gly-174, Ser-207, and 228–229; that span reads GG.

The protein belongs to the triosephosphate isomerase family. Homodimer.

The protein resides in the cytoplasm. It catalyses the reaction D-glyceraldehyde 3-phosphate = dihydroxyacetone phosphate. Its pathway is carbohydrate biosynthesis; gluconeogenesis. It functions in the pathway carbohydrate degradation; glycolysis; D-glyceraldehyde 3-phosphate from glycerone phosphate: step 1/1. Its function is as follows. Involved in the gluconeogenesis. Catalyzes stereospecifically the conversion of dihydroxyacetone phosphate (DHAP) to D-glyceraldehyde-3-phosphate (G3P). In Prochlorococcus marinus (strain NATL2A), this protein is Triosephosphate isomerase.